Consider the following 305-residue polypeptide: NAD-dependent protein deacylase SIR4 (305 aa).

A mitochondrion-targeting transit peptide spans 1 to 10 (MSAQVMHNRV). The region spanning 11–305 (MGTVKDSASK…VLEELASTIR (295 aa)) is the Deacetylase sirtuin-type domain. Residues 37-57 (GAGVSTDSGIPDYRGPQGIYS) and 118-121 (QNVD) contribute to the NAD(+) site. His-139 (proton acceptor) is an active-site residue. Residues Cys-147, Cys-150, Cys-209, and Cys-212 each contribute to the Zn(2+) site. Residues 249–251 (GSS), 275–277 (NLG), and Ser-293 each bind NAD(+).

This sequence belongs to the sirtuin family. Class II subfamily. It depends on Zn(2+) as a cofactor.

Its subcellular location is the mitochondrion matrix. The enzyme catalyses N(6)-acetyl-L-lysyl-[protein] + NAD(+) + H2O = 2''-O-acetyl-ADP-D-ribose + nicotinamide + L-lysyl-[protein]. In terms of biological role, NAD-dependent protein deacylase. Catalyzes the NAD-dependent hydrolysis of acyl groups from lysine residues. In Batrachochytrium dendrobatidis (strain JAM81 / FGSC 10211) (Frog chytrid fungus), this protein is NAD-dependent protein deacylase SIR4.